The chain runs to 142 residues: Large ribosomal subunit protein uL13 (142 aa).

It belongs to the universal ribosomal protein uL13 family. Part of the 50S ribosomal subunit.

Its function is as follows. This protein is one of the early assembly proteins of the 50S ribosomal subunit, although it is not seen to bind rRNA by itself. It is important during the early stages of 50S assembly. In Salmonella agona (strain SL483), this protein is Large ribosomal subunit protein uL13.